The primary structure comprises 341 residues: MTETNKNVDALEKINQMSSADYYFDSYSHFGIHEEMLKDEVRTLAYRRAIINNRKLFEGKVVLDVGCGTGILCMFAAQAGAKMVIGVDNSEMLPIAQKIITANNFDKTITLIKGKMEEVVLPVDKVDIIISEWMGYFMLYEGMLDTVLYARDKYLVPGGVILPDKASLYITAIEDQDYKEEKINYWNNVYGFDMSCIREIALKEPLVDVVQPNMIVTNDCCILTVDIMTITKDELKFRSDFKLKALRDDLIHAFVVYFDIEFSKGDKPVCFSTGPKAKYTHWKQSIMYFEDHIKIQQGEIITGTMDCAPFDKNQRDLKIKLDFNFAGELMKSSSSLEYHMR.

Residues 20-315 (ADYYFDSYSH…DCAPFDKNQR (296 aa)) enclose the SAM-dependent MTase PRMT-type domain. S-adenosyl-L-methionine-binding residues include H33, R42, G66, D88, and E117. Residues E132 and E141 contribute to the active site.

Belongs to the class I-like SAM-binding methyltransferase superfamily. Protein arginine N-methyltransferase family.

The protein resides in the nucleus. Its subcellular location is the cytoplasm. It is found in the cytosol. The enzyme catalyses L-arginyl-[protein] + 2 S-adenosyl-L-methionine = N(omega),N(omega)-dimethyl-L-arginyl-[protein] + 2 S-adenosyl-L-homocysteine + 2 H(+). It catalyses the reaction L-arginyl-[protein] + S-adenosyl-L-methionine = N(omega)-methyl-L-arginyl-[protein] + S-adenosyl-L-homocysteine + H(+). Its function is as follows. Arginine methyltransferase that methylates the guanidino nitrogens of arginyl residues present in proteins such as ribonucleoproteins and histones. The chain is Protein arginine N-methyltransferase 1 (prmt1) from Dictyostelium discoideum (Social amoeba).